The sequence spans 215 residues: Probable phosphoglycerate mutase GpmB (215 aa).

Substrate-binding positions include 8–15 (RHGETQWN), 21–22 (QG), arginine 58, lysine 60, 82–85 (ELDM), 104–105 (RR), and 151–152 (GI). Histidine 9 functions as the Tele-phosphohistidine intermediate in the catalytic mechanism. The active-site Proton donor/acceptor is glutamate 82.

It belongs to the phosphoglycerate mutase family. GpmB subfamily.

It catalyses the reaction (2R)-2-phosphoglycerate = (2R)-3-phosphoglycerate. The protein operates within carbohydrate degradation; glycolysis; pyruvate from D-glyceraldehyde 3-phosphate: step 3/5. The protein is Probable phosphoglycerate mutase GpmB of Salmonella typhi.